The sequence spans 341 residues: Heat-inducible transcription repressor HrcA (341 aa).

Belongs to the HrcA family.

In terms of biological role, negative regulator of class I heat shock genes (grpE-dnaK-dnaJ and groELS operons). Prevents heat-shock induction of these operons. This Leptothrix cholodnii (strain ATCC 51168 / LMG 8142 / SP-6) (Leptothrix discophora (strain SP-6)) protein is Heat-inducible transcription repressor HrcA.